We begin with the raw amino-acid sequence, 405 residues long: Argininosuccinate synthase (405 aa).

ATP contacts are provided by residues 10–18 and alanine 37; that span reads AFSGGLDTS. L-citrulline is bound by residues tyrosine 90 and serine 95. Glycine 120 is a binding site for ATP. Positions 122, 126, and 127 each coordinate L-aspartate. Position 126 (asparagine 126) interacts with L-citrulline. The L-citrulline site is built by arginine 130, serine 181, serine 190, glutamate 266, and tyrosine 278.

This sequence belongs to the argininosuccinate synthase family. Type 1 subfamily. As to quaternary structure, homotetramer.

Its subcellular location is the cytoplasm. It catalyses the reaction L-citrulline + L-aspartate + ATP = 2-(N(omega)-L-arginino)succinate + AMP + diphosphate + H(+). The protein operates within amino-acid biosynthesis; L-arginine biosynthesis; L-arginine from L-ornithine and carbamoyl phosphate: step 2/3. This chain is Argininosuccinate synthase, found in Rhizorhabdus wittichii (strain DSM 6014 / CCUG 31198 / JCM 15750 / NBRC 105917 / EY 4224 / RW1) (Sphingomonas wittichii).